A 120-amino-acid polypeptide reads, in one-letter code: Membrane-anchored ubiquitin-fold protein 4 (120 aa).

The 67-residue stretch at 7-73 (VELKFRLYDG…LENGKTVAQC (67 aa)) folds into the Ubiquitin-like domain. Cys115 is lipidated: S-palmitoyl cysteine. The residue at position 117 (Cys117) is a Cysteine methyl ester. A lipid anchor (S-farnesyl cysteine) is attached at Cys117. Residues 118 to 120 (TIM) constitute a propeptide, removed in mature form.

Ubiquitous.

It localises to the cell membrane. Its function is as follows. May serve as docking site to facilitate the association of other proteins to the plasma membrane. This chain is Membrane-anchored ubiquitin-fold protein 4 (MUB4), found in Arabidopsis thaliana (Mouse-ear cress).